The sequence spans 341 residues: S-adenosylmethionine:tRNA ribosyltransferase-isomerase (341 aa).

The protein belongs to the QueA family. As to quaternary structure, monomer.

Its subcellular location is the cytoplasm. The catalysed reaction is 7-aminomethyl-7-carbaguanosine(34) in tRNA + S-adenosyl-L-methionine = epoxyqueuosine(34) in tRNA + adenine + L-methionine + 2 H(+). The protein operates within tRNA modification; tRNA-queuosine biosynthesis. Transfers and isomerizes the ribose moiety from AdoMet to the 7-aminomethyl group of 7-deazaguanine (preQ1-tRNA) to give epoxyqueuosine (oQ-tRNA). This Staphylococcus haemolyticus (strain JCSC1435) protein is S-adenosylmethionine:tRNA ribosyltransferase-isomerase.